A 531-amino-acid chain; its full sequence is 2-isopropylmalate synthase (531 aa).

The 277-residue stretch at 8–284 (IIIFDTTLRD…LTNIDTKQIY (277 aa)) folds into the Pyruvate carboxyltransferase domain. The Mn(2+) site is built by aspartate 17, histidine 208, histidine 210, and asparagine 244. The tract at residues 408 to 531 (RVELVQVSCG…TQDKQTEVTA (124 aa)) is regulatory domain.

This sequence belongs to the alpha-IPM synthase/homocitrate synthase family. LeuA type 1 subfamily. As to quaternary structure, homodimer. Mn(2+) is required as a cofactor.

It localises to the cytoplasm. The enzyme catalyses 3-methyl-2-oxobutanoate + acetyl-CoA + H2O = (2S)-2-isopropylmalate + CoA + H(+). Its pathway is amino-acid biosynthesis; L-leucine biosynthesis; L-leucine from 3-methyl-2-oxobutanoate: step 1/4. Its function is as follows. Catalyzes the condensation of the acetyl group of acetyl-CoA with 3-methyl-2-oxobutanoate (2-ketoisovalerate) to form 3-carboxy-3-hydroxy-4-methylpentanoate (2-isopropylmalate). This Trichormus variabilis (strain ATCC 29413 / PCC 7937) (Anabaena variabilis) protein is 2-isopropylmalate synthase.